Consider the following 235-residue polypeptide: MKKLSKRMASLSTKIEDRIYAPLEALSIIKENANAKFDETIEAHIRLGIDPKYTDQQLRTTVALPHGTGQSIRIAVITSGENVSKAKSAGADLFGEEDLVESINKGNMEFDLLIATPDMMPKVAKLGRVLGPRGLMPNPKAGTVTNDIGNAIKEFKAGKLEFRADKAGIVHVRFGKASFTKEALFENLKTLQESIDKNKPSGAKGKYWKSFYVTSTMGPSVQVDINAVQDYQAEG.

Belongs to the universal ribosomal protein uL1 family. Part of the 50S ribosomal subunit.

In terms of biological role, binds directly to 23S rRNA. The L1 stalk is quite mobile in the ribosome, and is involved in E site tRNA release. Functionally, protein L1 is also a translational repressor protein, it controls the translation of the L11 operon by binding to its mRNA. The protein is Large ribosomal subunit protein uL1 of Prochlorococcus marinus (strain MIT 9215).